The chain runs to 274 residues: Large ribosomal subunit protein uL2 (274 aa).

Disordered regions lie at residues 30–54 (EKSL…IRHK) and 223–274 (VAMN…QLKG). Positions 36–48 (GKKSSGGRNNNGR) are enriched in low complexity. A compositionally biased stretch (basic and acidic residues) spans 263–274 (KFSDKYIKQLKG).

Belongs to the universal ribosomal protein uL2 family. In terms of assembly, part of the 50S ribosomal subunit. Forms a bridge to the 30S subunit in the 70S ribosome.

In terms of biological role, one of the primary rRNA binding proteins. Required for association of the 30S and 50S subunits to form the 70S ribosome, for tRNA binding and peptide bond formation. It has been suggested to have peptidyltransferase activity; this is somewhat controversial. Makes several contacts with the 16S rRNA in the 70S ribosome. This chain is Large ribosomal subunit protein uL2, found in Wolbachia sp. subsp. Brugia malayi (strain TRS).